The chain runs to 429 residues: Carboxypeptidase B (429 aa).

An N-terminal signal peptide occupies residues 1–15 (MKFLLVLALCAVVYA). The Peptidase M14 domain maps to 121-423 (NYQELEVIDE…EGIVVGARRA (303 aa)). Residues histidine 182 and glutamate 185 each contribute to the Zn(2+) site. Substrate contacts are provided by residues 182–185 (HARE), arginine 236, and 256–257 (NR). Residues cysteine 250 and cysteine 273 are joined by a disulfide bond. Histidine 309 provides a ligand contact to Zn(2+). Substrate is bound by residues 310–311 (SF) and tyrosine 365. Residue glutamate 387 is the Proton donor/acceptor of the active site.

It belongs to the peptidase M14 family. Zn(2+) is required as a cofactor.

The protein resides in the secreted. It catalyses the reaction Preferential release of a C-terminal lysine or arginine amino acid.. With respect to regulation, highly resistant to inhibition by potato carboxypeptidase inhibitor (PCI). Moderately inhibited by leech carboxypeptidase inhibitor (LCI) and tick carboxypeptidase inhibitor (TCI). Functionally, metalloprotease which cleaves a single amino acid from the C-terminal end of polypeptide chains. Shows a strong preference for peptides with a terminal lysine residue. The chain is Carboxypeptidase B from Helicoverpa zea (Corn earworm moth).